The chain runs to 134 residues: Profilin-4 (134 aa).

A disulfide bridge links cysteine 13 with cysteine 118. The short motif at 84–100 is the Involved in PIP2 interaction element; it reads AVIRGKKGSGGITIKKT. Position 114 is a phosphothreonine (threonine 114).

The protein belongs to the profilin family. Occurs in many kinds of cells as a complex with monomeric actin in a 1:1 ratio. In terms of processing, phosphorylated by MAP kinases.

The protein resides in the cytoplasm. It is found in the cytoskeleton. In terms of biological role, binds to actin and affects the structure of the cytoskeleton. At high concentrations, profilin prevents the polymerization of actin, whereas it enhances it at low concentrations. This chain is Profilin-4, found in Olea europaea (Common olive).